Here is a 454-residue protein sequence, read N- to C-terminus: Putative F-box/LRR-repeat protein At3g58880 (454 aa).

One can recognise an F-box domain in the interval 2–48 (VDLVSSLPDDLLGHILSLLTTKEAALTSILSKRWRYLIAFVPYLEFD). 7 LRR repeats span residues 77–102 (LALHGDSPIRKFSLKCKTGVDLDLLN), 144–168 (SGCRIAFGPEHISALPMLKTLTLDS), 169–194 (VSWSDSGQLERLLSACPALEALNLAN), 214–240 (IKSVSLSGPAHVFSFDTPNLLCLNYTA), 270–301 (LVSVRKNGLLMLSEVQKLIRGISSVRKLYLSP), 303–327 (TLQVLGQCSQAMPVFNNLTFLVIES), and 328–353 (SMDIRWQAMPVLLKNCPRLETLVIKG).

This Arabidopsis thaliana (Mouse-ear cress) protein is Putative F-box/LRR-repeat protein At3g58880.